The primary structure comprises 371 residues: 4-hydroxybenzoate polyprenyltransferase, mitochondrial (371 aa).

The transit peptide at 1 to 34 (MLGSRAAGFARGLRAVALAWLPGWRGRSFALARA) directs the protein to the mitochondrion. At 35–83 (AGAPHGGDLQPPACPEPRGRQLSLSAAAVVDSAPRPLQPYLRLMRLDKP) the chain is on the mitochondrial matrix side. The helical transmembrane segment at 84 to 104 (IGTWLLYLPCTWSIGLAAEPG) threads the bilayer. Residues 105–108 (CFPD) are Mitochondrial intermembrane-facing. A helical membrane pass occupies residues 109–129 (WYMLSLFGTGAILMRGAGCTI). Residues 130–148 (NDMWDQDYDKKVTRTANRP) lie on the Mitochondrial matrix side of the membrane. Residues 149–169 (IAAGDISTFQSFVFLGGQLTL) form a helical membrane-spanning segment. The Mitochondrial intermembrane portion of the chain corresponds to 170 to 172 (ALG). The chain crosses the membrane as a helical span at residues 173–193 (VLLCLNYYSIALGAGSLLLVI). Residues 194–203 (TYPLMKRISY) lie on the Mitochondrial matrix side of the membrane. The helical transmembrane segment at 204–224 (WPQLALGLTFNWGALLGWSAI) threads the bilayer. Residues 225–231 (KGSCDPS) lie on the Mitochondrial intermembrane side of the membrane. The chain crosses the membrane as a helical span at residues 232–252 (VCLPLYFSGVMWTLIYDTIYA). Topologically, residues 253-277 (HQDKRDDVLIGLKSTALRFGENTKP) are mitochondrial matrix. A helical membrane pass occupies residues 278 to 298 (WLSGFSVAMLGALSLVGVNSG). At 299 to 300 (QT) the chain is on the mitochondrial intermembrane side. Residues 301 to 321 (APYYAALGAVGAHLTHQIYTL) form a helical membrane-spanning segment. The Mitochondrial matrix portion of the chain corresponds to 322-332 (DIHRPEDCWNK). Residues 333 to 353 (FISNRTLGLIVFLGIVLGNLW) form a helical membrane-spanning segment. Topologically, residues 354–371 (KEKKTDKTKKGIENKIEN) are mitochondrial intermembrane.

This sequence belongs to the UbiA prenyltransferase family. It depends on Mg(2+) as a cofactor. As to expression, widely expressed. Present in all of the tissues tested. Expressed at higher level in skeletal muscle, adrenal glands and the heart.

Its subcellular location is the mitochondrion inner membrane. The catalysed reaction is an all-trans-polyprenyl diphosphate + 4-hydroxybenzoate = a 4-hydroxy-3-(all-trans-polyprenyl)benzoate + diphosphate. The enzyme catalyses all-trans-decaprenyl diphosphate + 4-hydroxybenzoate = 4-hydroxy-3-(all-trans-decaprenyl)benzoate + diphosphate. It catalyses the reaction all-trans-nonaprenyl diphosphate + 4-hydroxybenzoate = 4-hydroxy-3-(all-trans-nonaprenyl)benzoate + diphosphate. The protein operates within cofactor biosynthesis; ubiquinone biosynthesis. In terms of biological role, mediates the second step in the final reaction sequence of coenzyme Q (CoQ) biosynthesis. Catalyzes the prenylation of para-hydroxybenzoate (PHB) with an all-trans polyprenyl donor (such as all-trans-decaprenyl diphosphate). The length of the polyprenyl side chain varies depending on the species, in humans, the side chain is comprised of 10 isoprenyls (decaprenyl) producing CoQ10 (also known as ubiquinone), whereas rodents predominantly generate CoQ9. However, this specificity is not complete, human tissues have low amounts of CoQ9 and rodent organs contain some CoQ10. Plays a central role in the biosynthesis of CoQ10. CoQ10 is a vital molecule that transports electrons from mitochondrial respiratory chain complexes. CoQs also function as cofactors for uncoupling protein and play a role as regulators of the extracellularly-induced ceramide-dependent apoptotic pathway. Regulates mitochondrial permeability transition pore (mPTP) opening and ROS production (pivotal events in cell death) in a tissue specific manner. This is 4-hydroxybenzoate polyprenyltransferase, mitochondrial from Homo sapiens (Human).